A 463-amino-acid chain; its full sequence is L-seryl-tRNA(Sec) selenium transferase (463 aa).

Lys-295 carries the post-translational modification N6-(pyridoxal phosphate)lysine.

This sequence belongs to the SelA family. Homodecamer; pentamer of dimers. Binds only one seryl-tRNA(Sec) per dimer. Pyridoxal 5'-phosphate serves as cofactor.

It is found in the cytoplasm. The catalysed reaction is L-seryl-tRNA(Sec) + selenophosphate + H(+) = L-selenocysteinyl-tRNA(Sec) + phosphate. The protein operates within aminoacyl-tRNA biosynthesis; selenocysteinyl-tRNA(Sec) biosynthesis; selenocysteinyl-tRNA(Sec) from L-seryl-tRNA(Sec) (bacterial route): step 1/1. Its function is as follows. Converts seryl-tRNA(Sec) to selenocysteinyl-tRNA(Sec) required for selenoprotein biosynthesis. This chain is L-seryl-tRNA(Sec) selenium transferase, found in Serratia proteamaculans (strain 568).